The primary structure comprises 365 residues: Homeobox protein Nkx-6.1 (365 aa).

Positions 35–136 (LYPAAYPPLP…SSSSASATSA (102 aa)) are disordered. 3 stretches are compositionally biased toward low complexity: residues 48-59 (PSSSSSSSSSSS), 69-92 (PGGLKPPAAGGLSSLGSPPQQLSA), and 110-136 (ASGAALPSASPSGSSSSSSSSASATSA). The repressor domain stretch occupies residues 102–269 (LSRPSMPVAS…KYLAGPERAR (168 aa)). Position 190 is an asymmetric dimethylarginine (arginine 190). A DNA-binding region (homeobox) is located at residues 237–296 (RKHTRPTFSGQQIFALEKTFEQTKYLAGPERARLAYSLGMTESQVKVWFQNRRTKWRKKH). The tract at residues 295–365 (KHAAEMATAK…LHASEAEGSS (71 aa)) is disordered. Residues 305–318 (KKQDSETERLKGTS) show a composition bias toward basic and acidic residues. The interval 307–365 (QDSETERLKGTSENEEDDDDYNKPLDPNSDDEKITQLLKKHKSSGGSLLLHASEAEGSS) is involved in DNA-binding.

In terms of tissue distribution, pancreatic beta cells.

It is found in the nucleus. Functionally, transcription factor which binds to specific A/T-rich DNA sequences in the promoter regions of a number of genes. Involved in the development of insulin-producing beta cells in the islets of Langerhans at the secondary transition. Together with NKX2-2 and IRX3 acts to restrict the generation of motor neurons to the appropriate region of the neural tube. Belongs to the class II proteins of neuronal progenitor factors, which are induced by SHH signals. The polypeptide is Homeobox protein Nkx-6.1 (Nkx6-1) (Rattus norvegicus (Rat)).